A 241-amino-acid polypeptide reads, in one-letter code: Phycocyanobilin:ferredoxin oxidoreductase (241 aa).

It belongs to the HY2 family.

The enzyme catalyses (2R,3Z)-phycocyanobilin + 4 oxidized [2Fe-2S]-[ferredoxin] = biliverdin IXalpha + 4 reduced [2Fe-2S]-[ferredoxin] + 4 H(+). In terms of biological role, catalyzes the four-electron reduction of biliverdin IX-alpha (2-electron reduction at both the A and D rings); the reaction proceeds via an isolatable 2-electron intermediate, 181,182-dihydrobiliverdin. This Prochlorococcus marinus (strain MIT 9312) protein is Phycocyanobilin:ferredoxin oxidoreductase.